A 908-amino-acid polypeptide reads, in one-letter code: MYRLEDTNSGGVMDKNKQKLSAYGSSGGSVDAAQGSGSGGGRQRHAPLYGRFVDAEDLPATHRDVMHHHSSPSSSSEVRAMQARIPNHFREPASGPLRKLSVDLIKTYKHINEVYYAKKKRRAQQTQGDDDSSNKKERKLYNDGYDDDNHDYIIKNGEKFLDRYEIDSLIGKGSFGQVVKAYDHEEQCHVAIKIIKNKKPFLNQAQIEVKLLEMMNRADAENKYYIVKLKRHFMWRNHLCLVFELLSYNLYDLLRNTNFRGVSLNLTRKFAQQLCTALLFLSTPELNIIHCDLKPENILLCNPKRSAIKIVDFGSSCQLGQRIYHYIQSRFYRSPEVLLGIQYDLAIDMWSLGCILVEMHTGEPLFSGCNEVDQMNKIVEVLGMPPKYLLDQAHKTRKFFDKIVADGSYVLKKNQNGRKYKPPGSRKLHDILGVETGGPGGRRLDEPGHSVSDYLKFKDLILRMLDFDPKTRVTPYYALQHNFFKRTADEATNTSGAGATANAGAGGSGSSGAGGSSGGGVGGGLGASNSSSGAVSSSSAAAPTAATAAATAAGSSGSGSSVGGGSSAAQQQQAMPLPLPLPLPLPPLAGPGGASDGQCHGLLMHSVAANAMNNFSALSLQSNAHPPPSLANSHHSTNSLGSLNHISPGSTGCHNNNSNSSNNNTRHSRLYGSNMVNMVGHHNSGSSNNHNSISYPHAMECDPPQMPPPPPNGHGRMRVPAIMQLQPNSYAPNSVPYYGNMSSSSVAAAAAAAAAAASHLMMTDSSVISASAAGGGQGGGNPGQNPVTPSAAAFLFPSQPAGTLYGTALGSLSDLPLPMPLPMSVPLQLPPSSSSSVSSGSASVGSGGVGVGVVGQRRHITGPAAQVGISQSVGSGSSGSATGASSSDASSSSPMVGVCVQQNPVVIH.

Disordered regions lie at residues methionine 1–alanine 46 and lysine 119–aspartate 143. A Bipartite nuclear localization signal motif is present at residues arginine 121 to lysine 139. A compositionally biased stretch (basic and acidic residues) spans serine 132–tyrosine 141. Residues tyrosine 164–phenylalanine 484 form the Protein kinase domain. ATP is bound by residues isoleucine 170–valine 178, lysine 193, and phenylalanine 243–leucine 246. Aspartate 292 serves as the catalytic Proton acceptor. Disordered stretches follow at residues alanine 552–glycine 592, asparagine 623–arginine 669, and proline 863–methionine 895. The span at serine 556–serine 566 shows a compositional bias: gly residues. Low complexity predominate over residues serine 567 to proline 576. A compositionally biased stretch (pro residues) spans leucine 577 to alanine 589. A compositionally biased stretch (polar residues) spans asparagine 623–histidine 654. Low complexity-rich tracts occupy residues asparagine 655–asparagine 664 and glycine 868–serine 893.

The protein belongs to the protein kinase superfamily. CMGC Ser/Thr protein kinase family. MNB/DYRK subfamily. In terms of tissue distribution, in ventral nerve cord and supraesophageal ganglion of embryos. Is most prominent in the mushroom body neuropil and the outer proliferation center of the optic lobes in third instar larvae.

The protein resides in the nucleus. The enzyme catalyses L-seryl-[protein] + ATP = O-phospho-L-seryl-[protein] + ADP + H(+). It carries out the reaction L-threonyl-[protein] + ATP = O-phospho-L-threonyl-[protein] + ADP + H(+). The catalysed reaction is L-tyrosyl-[protein] + ATP = O-phospho-L-tyrosyl-[protein] + ADP + H(+). In terms of biological role, role in the specific control of proper proliferation of optic lobe neuronal progeny. This is Serine/threonine-protein kinase minibrain (mnb) from Drosophila melanogaster (Fruit fly).